Here is a 204-residue protein sequence, read N- to C-terminus: Protein OPG030 (204 aa).

Residues 95–177 (FLRQYINNNI…ITYSELTNAI (83 aa)) enclose the BACK domain.

This sequence belongs to the orthopoxvirus OPG030 family.

The chain is Protein OPG030 (OPG30) from Homo sapiens (Human).